A 118-amino-acid polypeptide reads, in one-letter code: MVRETRVRVARVYEDIDPDDGQRVLVDRIWPHGIRKDDQRVGIWCKDVAPSKELREWYHHQPERFDEFASRYQEELHDSAALAELRKLTGRSVVTPVTATRHVARSHAAVLAQLLNGR.

The protein to E.coli YeaO.

This is an uncharacterized protein from Mycobacterium bovis (strain ATCC BAA-935 / AF2122/97).